The sequence spans 175 residues: ATP synthase subunit b 1 (175 aa).

The helical transmembrane segment at 26 to 48 (IINLAIIIGVLYVYGSKFIGNIL) threads the bilayer.

The protein belongs to the ATPase B chain family. As to quaternary structure, F-type ATPases have 2 components, F(1) - the catalytic core - and F(0) - the membrane proton channel. F(1) has five subunits: alpha(3), beta(3), gamma(1), delta(1), epsilon(1). F(0) has four main subunits: a(1), b(1), b'(1) and c(10-14). The alpha and beta chains form an alternating ring which encloses part of the gamma chain. F(1) is attached to F(0) by a central stalk formed by the gamma and epsilon chains, while a peripheral stalk is formed by the delta, b and b' chains.

The protein localises to the cellular thylakoid membrane. F(1)F(0) ATP synthase produces ATP from ADP in the presence of a proton or sodium gradient. F-type ATPases consist of two structural domains, F(1) containing the extramembraneous catalytic core and F(0) containing the membrane proton channel, linked together by a central stalk and a peripheral stalk. During catalysis, ATP synthesis in the catalytic domain of F(1) is coupled via a rotary mechanism of the central stalk subunits to proton translocation. Functionally, component of the F(0) channel, it forms part of the peripheral stalk, linking F(1) to F(0). This Picosynechococcus sp. (strain ATCC 27264 / PCC 7002 / PR-6) (Agmenellum quadruplicatum) protein is ATP synthase subunit b 1.